The sequence spans 256 residues: PGL/p-HBAD biosynthesis glycosyltransferase Mb2981 (256 aa).

The protein belongs to the glycosyltransferase 2 family.

Involved in glycosylation steps downstream of mono-O-methyl-glycosyl-p-hydroxybenzoic acid derivative (p-HBAD I) and 2-O-methyl-rhamnosyl-phenolphthiocerol dimycocerosate (mycoside B) during the p-hydroxybenzoic acid derivatives (p-HBAD) and glycosylated phenolphthiocerol dimycocerosates (PGL) biosynthesis. This Mycobacterium bovis (strain ATCC BAA-935 / AF2122/97) protein is PGL/p-HBAD biosynthesis glycosyltransferase Mb2981.